Here is a 355-residue protein sequence, read N- to C-terminus: Uroporphyrinogen decarboxylase (355 aa).

Substrate-binding positions include arginine 27 to arginine 31, aspartate 78, tyrosine 155, serine 210, and histidine 328.

Belongs to the uroporphyrinogen decarboxylase family. In terms of assembly, homodimer.

The protein localises to the cytoplasm. The catalysed reaction is uroporphyrinogen III + 4 H(+) = coproporphyrinogen III + 4 CO2. Its pathway is porphyrin-containing compound metabolism; protoporphyrin-IX biosynthesis; coproporphyrinogen-III from 5-aminolevulinate: step 4/4. Catalyzes the decarboxylation of four acetate groups of uroporphyrinogen-III to yield coproporphyrinogen-III. The sequence is that of Uroporphyrinogen decarboxylase from Ectopseudomonas mendocina (strain ymp) (Pseudomonas mendocina).